Here is a 483-residue protein sequence, read N- to C-terminus: MSLGYAEKLSYREDVGNVGMPEIFDSPELLHKKIEELAVMVRESKHLVVFTGAGISTSSGIPDFRGPKGVWTLQRSGKGVPGASLPFHRAVPTLTHMALVELEKTGRLKFVISQNVDSLHLRSGLPREKLAELHGNSFKEICPSCKKEYLRDFEIETIGLKDTPRRCSDKNCGARLKDTVLDWEDALPPEEMDAAKEQCQTADLVLCLGTSLQITPACNMPLLSLKNGGRVAIVNLQATPKDKKASLVIHGLVDKVIAGVMYMMNLRIPPYIRTDFVQISLRNSVKKKCVRWTLRVTSIHGLRAPLPFLRSVEVSFPERPDMKPVVLKEQPFSLQRETSMNRPFVMLLTFNFSDGCGCSSSSIEWPVDFLKQKDSFVRDRSLVLQELQHAAEHRSRAGQHAILEREGVPRAETSIHALVTNIVRYDTEDSKAAVPMATWMNSNGSLSKRHMDAIGCNPASSKKQKLVATRHRRKGLNPATQKV.

The Deacetylase sirtuin-type domain occupies 27–270 (PELLHKKIEE…MYMMNLRIPP (244 aa)). Residues 53–57 (AGIST), 63–65 (DFR), and 114–117 (QNVD) each bind NAD(+). H134 functions as the Proton acceptor in the catalytic mechanism. Residues C142, C145, C167, and C172 each contribute to the Zn(2+) site. NAD(+) contacts are provided by residues 209–211 (GTS) and 235–237 (NLQ).

It belongs to the sirtuin family. Class IV subfamily. The cofactor is Zn(2+).

It is found in the nucleus. It catalyses the reaction N(6)-acetyl-L-lysyl-[protein] + NAD(+) + H2O = 2''-O-acetyl-ADP-D-ribose + nicotinamide + L-lysyl-[protein]. NAD-dependent protein deacetylase. Has deacetylase activity towards H3K9Ac. May have a function in the safeguard against genome instability and DNA damage to ensure plant cell growth. May negatively regulate metabolic signal transduction involving methanol and jasmonates during leaf senescence. Required for histone H3K9Ac deacetylation and repression of AP2-1/RSR1 and amylase genes during early seed development. Functions as an epigenetic regulator to repress the expression of glycolytic genes and glycolysis in seedlings. Reduces lysine acetylation of the glycolytic glyceraldehyde-3-phosphate dehydrogenase (GAPDH), which is found to also function as an activator of glycolytic gene expression. This is NAD-dependent protein deacetylase SRT1 from Oryza sativa subsp. indica (Rice).